Consider the following 243-residue polypeptide: Ubiquinone/menaquinone biosynthesis C-methyltransferase UbiE (243 aa).

S-adenosyl-L-methionine contacts are provided by residues Thr-69, Asp-90, and 116 to 117 (DA).

Belongs to the class I-like SAM-binding methyltransferase superfamily. MenG/UbiE family.

It catalyses the reaction a 2-demethylmenaquinol + S-adenosyl-L-methionine = a menaquinol + S-adenosyl-L-homocysteine + H(+). The catalysed reaction is a 2-methoxy-6-(all-trans-polyprenyl)benzene-1,4-diol + S-adenosyl-L-methionine = a 5-methoxy-2-methyl-3-(all-trans-polyprenyl)benzene-1,4-diol + S-adenosyl-L-homocysteine + H(+). The protein operates within quinol/quinone metabolism; menaquinone biosynthesis; menaquinol from 1,4-dihydroxy-2-naphthoate: step 2/2. Its pathway is cofactor biosynthesis; ubiquinone biosynthesis. In terms of biological role, methyltransferase required for the conversion of demethylmenaquinol (DMKH2) to menaquinol (MKH2) and the conversion of 2-polyprenyl-6-methoxy-1,4-benzoquinol (DDMQH2) to 2-polyprenyl-3-methyl-6-methoxy-1,4-benzoquinol (DMQH2). The protein is Ubiquinone/menaquinone biosynthesis C-methyltransferase UbiE of Paraburkholderia xenovorans (strain LB400).